We begin with the raw amino-acid sequence, 300 residues long: MNTLVLKIDAILSKHLKKQLAPYTISSQNIYVAFAAKKNGVTVLLYKSGKLVLQGNGANALAQELNLPVAKTVFEASNNSQDIPIIGSDEVGNGSYFGGIAVVASFVDPKDHPFLKKLGVDDSKKLSDKTIQQIAPLLEKQIPHQSLLLSPKKYNELVGKSKPYNTISIKVALHNQAIFLLLQKGIQPKQIVIDAFTSQSNYEKHLKKEKNHFPNPLTFQEKAESHYLAVAVSSIIARNLFLDNLDQLGQDLGYQLPSGAGSASDKVASQLLAAYGMSSLEYSAKLHFANTHKAQALLTK.

The RNase H type-2 domain maps to 83 to 300 (IPIIGSDEVG…THKAQALLTK (218 aa)). A divalent metal cation-binding residues include aspartate 89, glutamate 90, and aspartate 194.

The protein belongs to the RNase HII family. RnhC subfamily. Requires Mn(2+) as cofactor. It depends on Mg(2+) as a cofactor.

The protein resides in the cytoplasm. It carries out the reaction Endonucleolytic cleavage to 5'-phosphomonoester.. Endonuclease that specifically degrades the RNA of RNA-DNA hybrids. The sequence is that of Ribonuclease HIII from Streptococcus pyogenes serotype M28 (strain MGAS6180).